The chain runs to 390 residues: Probable inactive secreted aspartyl protease (390 aa).

Positions 1–20 are cleaved as a signal peptide; the sequence is MQLTIKALVGILTTISAATA. The propeptide at 21–69 is removed in mature form; it reads VSFDMENLGAEKRGVSGEELHMLHGNEVLARFANGVYPEVANGTRVSKR. N-linked (GlcNAc...) asparagine glycosylation is present at N62. The Peptidase A1 domain occupies 86–388; sequence WAVKAKIGSN…KFDSNEMQIA (303 aa). Residues D104 and D273 contribute to the active site. A disulfide bond links C313 and C346.

It belongs to the peptidase A1 family.

It localises to the secreted. Probable inactive secreted aspartyl protease. May promote an inflammatory immune response in the host when the host skin barrier is breached. Has no detectable protease activity in vitro on fluorogenic substrates, a peptide library, or with the general protease substrate casein. The presence of the enzyme also does not affect the activity of the secreted aspartyl protease SAP1. The polypeptide is Probable inactive secreted aspartyl protease (Malassezia globosa (strain ATCC MYA-4612 / CBS 7966) (Dandruff-associated fungus)).